The sequence spans 523 residues: Siroheme synthase (523 aa).

The segment at 1–203 (MNTFPLFFKL…GNENEAIAQL (203 aa)) is precorrin-2 dehydrogenase /sirohydrochlorin ferrochelatase. NAD(+) is bound by residues 22-23 (DV) and 43-44 (PS). A Phosphoserine modification is found at serine 128. The uroporphyrinogen-III C-methyltransferase stretch occupies residues 231-523 (GEVYIVGAGP…DGGLEQLVID (293 aa)). Residue proline 240 participates in S-adenosyl-L-methionine binding. Aspartate 263 serves as the catalytic Proton acceptor. Lysine 285 functions as the Proton donor in the catalytic mechanism. Residues 316–318 (GGD), isoleucine 321, 346–347 (TA), methionine 398, and alanine 427 each bind S-adenosyl-L-methionine.

In the N-terminal section; belongs to the precorrin-2 dehydrogenase / sirohydrochlorin ferrochelatase family. The protein in the C-terminal section; belongs to the precorrin methyltransferase family.

It carries out the reaction uroporphyrinogen III + 2 S-adenosyl-L-methionine = precorrin-2 + 2 S-adenosyl-L-homocysteine + H(+). The catalysed reaction is precorrin-2 + NAD(+) = sirohydrochlorin + NADH + 2 H(+). It catalyses the reaction siroheme + 2 H(+) = sirohydrochlorin + Fe(2+). The protein operates within cofactor biosynthesis; adenosylcobalamin biosynthesis; precorrin-2 from uroporphyrinogen III: step 1/1. Its pathway is cofactor biosynthesis; adenosylcobalamin biosynthesis; sirohydrochlorin from precorrin-2: step 1/1. It functions in the pathway porphyrin-containing compound metabolism; siroheme biosynthesis; precorrin-2 from uroporphyrinogen III: step 1/1. It participates in porphyrin-containing compound metabolism; siroheme biosynthesis; siroheme from sirohydrochlorin: step 1/1. The protein operates within porphyrin-containing compound metabolism; siroheme biosynthesis; sirohydrochlorin from precorrin-2: step 1/1. Multifunctional enzyme that catalyzes the SAM-dependent methylations of uroporphyrinogen III at position C-2 and C-7 to form precorrin-2 via precorrin-1. Then it catalyzes the NAD-dependent ring dehydrogenation of precorrin-2 to yield sirohydrochlorin. Finally, it catalyzes the ferrochelation of sirohydrochlorin to yield siroheme. This is Siroheme synthase from Psychrobacter cryohalolentis (strain ATCC BAA-1226 / DSM 17306 / VKM B-2378 / K5).